Here is a 346-residue protein sequence, read N- to C-terminus: MKASHICSYLLSIAPLVVSHGVHHNRDHGHEANHESKQSFLILKQESIFYSLVCFLQNHLFVLGPRYNAIVAILIIQLMPCLFVLFVPGLRKNDRASLTLSLLVSFSLGTLLGDILLHVIPESLSGVTDVTMVGGAIFLGFISFLTLDKTMRILSGTSNDDGSIHSHSHSHTPQQTAEKKAGFNMSAYLNVISGIAHHITDGIALATSFYSSTQVGIMTSIAVTFHEIPHELGDFAILLSSGFTFPQAIRAQAVTAFGAVVGTSIGCWMNEIGNNSHKATSSSANASELMLPFTAGGLIYIATTSVVPQILHSSAPDSKLREFKKWALQLVFIFVGFAVMALMDEH.

The Extracellular segment spans residues 1–2 (MK). A helical membrane pass occupies residues 3 to 23 (ASHICSYLLSIAPLVVSHGVH). Residues 24–69 (HNRDHGHEANHESKQSFLILKQESIFYSLVCFLQNHLFVLGPRYNA) lie on the Cytoplasmic side of the membrane. The chain crosses the membrane as a helical span at residues 70–90 (IVAILIIQLMPCLFVLFVPGL). Over 91–99 (RKNDRASLT) the chain is Extracellular. Residues 100-120 (LSLLVSFSLGTLLGDILLHVI) form a helical membrane-spanning segment. At 121–126 (PESLSG) the chain is on the cytoplasmic side. The helical transmembrane segment at 127-147 (VTDVTMVGGAIFLGFISFLTL) threads the bilayer. Topologically, residues 148-202 (DKTMRILSGTSNDDGSIHSHSHSHTPQQTAEKKAGFNMSAYLNVISGIAHHITDG) are extracellular. N-linked (GlcNAc...) asparagine glycosylation occurs at Asn-184. The chain crosses the membrane as a helical span at residues 203-223 (IALATSFYSSTQVGIMTSIAV). Residues 224–252 (TFHEIPHELGDFAILLSSGFTFPQAIRAQ) lie on the Cytoplasmic side of the membrane. Residues 253-273 (AVTAFGAVVGTSIGCWMNEIG) form a helical membrane-spanning segment. 2 N-linked (GlcNAc...) asparagine glycosylation sites follow: Asn-274 and Asn-285. The Extracellular segment spans residues 274–290 (NNSHKATSSSANASELM). A helical transmembrane segment spans residues 291–311 (LPFTAGGLIYIATTSVVPQIL). The Cytoplasmic segment spans residues 312 to 322 (HSSAPDSKLRE). The helical transmembrane segment at 323–343 (FKKWALQLVFIFVGFAVMALM) threads the bilayer. Residues 344–346 (DEH) lie on the Extracellular side of the membrane.

This sequence belongs to the ZIP transporter (TC 2.A.5) family. KE4/Catsup subfamily.

It is found in the endoplasmic reticulum membrane. In terms of biological role, zinc transporter whose role depends on the zinc status of the cells. It helps to balance zinc levels between the cytosol and the secretory pathway. It transports zinc into the secretory pathway in a zinc-adequate environment and in a high zinc medium. In high zinc medium, transport of zinc into the secretory pathway is a way to eliminate zinc from the cytosol. Under low cytosolic zinc conditions, it removes zinc from the secretory pathway and acts as a zinc importer that helps to alleviate ER stress. This Saccharomyces cerevisiae (strain ATCC 204508 / S288c) (Baker's yeast) protein is Zinc transporter YKE4 (YKE4).